The following is a 459-amino-acid chain: MLLDLNRFSFSVFLKEVRLLTALALPMLLAQVAQVGIGFVDTVMAGGAGKEDLAAVALGSSAFATVYITFMGIMAALNPMIAQLYGAGKTDEVGETGRQGIWFGLFLGVFGMVLMWAAITPFRNWLTLSDYVEGTMAQYMLFTSLAMPAAMVHRALHAYASSLNRPRLIMLVSFAAFVLNVPLNYIFVYGKFGMPALGGAGCGLATMAVFWFSALALWIYIAKENFFRPFGLTAKFGKPDWAVFKQIWKIGAPIGLSYFLEASAFSFIVFLIAPFGEDYVAAQQVGISLSGILYMIPQSVGSAGTVRIGFSLGRREFSRARYISGVSLVSGWMLAVITVLSLVLFRSPLVSMYNNDPAVLSIAATVLLFAGLFQPADFTQCIASYALRGYKVTKVPMFIHAAAFWGCGLLPGYLLAYRFDMGIYGFWTALIASLTIAAIALVWCLELCSREMVRSHKAV.

Transmembrane regions (helical) follow at residues 20–40 (LTAL…IGFV), 53–73 (LAAV…FMGI), 100–120 (GIWF…AAIT), 132–152 (VEGT…AAMV), 168–188 (LIML…YIFV), 202–222 (CGLA…IYIA), 252–272 (APIG…VFLI), 285–305 (VGIS…SAGT), 325–345 (GVSL…LVLF), 358–378 (AVLS…PADF), 395–415 (VPMF…GYLL), and 423–443 (IYGF…ALVW).

The protein belongs to the multi antimicrobial extrusion (MATE) (TC 2.A.66.1) family.

It localises to the cell inner membrane. Multidrug efflux pump. This chain is Probable multidrug resistance protein NorM (norM), found in Neisseria meningitidis serogroup A / serotype 4A (strain DSM 15465 / Z2491).